Reading from the N-terminus, the 88-residue chain is Small ribosomal subunit protein uS15 (88 aa).

The protein belongs to the universal ribosomal protein uS15 family. In terms of assembly, part of the 30S ribosomal subunit. Forms a bridge to the 50S subunit in the 70S ribosome, contacting the 23S rRNA.

In terms of biological role, one of the primary rRNA binding proteins, it binds directly to 16S rRNA where it helps nucleate assembly of the platform of the 30S subunit by binding and bridging several RNA helices of the 16S rRNA. Functionally, forms an intersubunit bridge (bridge B4) with the 23S rRNA of the 50S subunit in the ribosome. This is Small ribosomal subunit protein uS15 from Francisella tularensis subsp. tularensis (strain FSC 198).